A 148-amino-acid polypeptide reads, in one-letter code: Azurin (148 aa).

The N-terminal stretch at 1–18 is a signal peptide; sequence MRNQLLFALAFIPTIAAA. The region spanning 19–148 is the Plastocyanin-like domain; it reads ASNCEVNVSA…MMRGTVKLVD (130 aa). Cysteine 22 and cysteine 45 are joined by a disulfide. Residues histidine 65, cysteine 131, histidine 136, and methionine 140 each contribute to the Cu cation site.

It localises to the periplasm. The protein operates within one-carbon metabolism; methylamine degradation. Probable electron acceptor for methylamine dehydrogenase. The chain is Azurin (azu) from Methylobacillus flagellatus (strain ATCC 51484 / DSM 6875 / VKM B-1610 / KT).